We begin with the raw amino-acid sequence, 385 residues long: 4-hydroxy-3-methylbut-2-en-1-yl diphosphate synthase (flavodoxin) 1 (385 aa).

Residues Cys280, Cys283, Cys315, and Glu322 each contribute to the [4Fe-4S] cluster site.

Belongs to the IspG family. [4Fe-4S] cluster is required as a cofactor.

The enzyme catalyses (2E)-4-hydroxy-3-methylbut-2-enyl diphosphate + oxidized [flavodoxin] + H2O + 2 H(+) = 2-C-methyl-D-erythritol 2,4-cyclic diphosphate + reduced [flavodoxin]. The protein operates within isoprenoid biosynthesis; isopentenyl diphosphate biosynthesis via DXP pathway; isopentenyl diphosphate from 1-deoxy-D-xylulose 5-phosphate: step 5/6. Functionally, converts 2C-methyl-D-erythritol 2,4-cyclodiphosphate (ME-2,4cPP) into 1-hydroxy-2-methyl-2-(E)-butenyl 4-diphosphate. In Streptomyces avermitilis (strain ATCC 31267 / DSM 46492 / JCM 5070 / NBRC 14893 / NCIMB 12804 / NRRL 8165 / MA-4680), this protein is 4-hydroxy-3-methylbut-2-en-1-yl diphosphate synthase (flavodoxin) 1.